Here is a 364-residue protein sequence, read N- to C-terminus: UDP-N-acetylglucosamine--N-acetylmuramyl-(pentapeptide) pyrophosphoryl-undecaprenol N-acetylglucosamine transferase (364 aa).

UDP-N-acetyl-alpha-D-glucosamine-binding positions include 19-21, Asn-131, Arg-167, Ser-195, Ile-250, and Gln-295; that span reads TGG.

The protein belongs to the glycosyltransferase 28 family. MurG subfamily.

Its subcellular location is the cell inner membrane. The catalysed reaction is di-trans,octa-cis-undecaprenyl diphospho-N-acetyl-alpha-D-muramoyl-L-alanyl-D-glutamyl-meso-2,6-diaminopimeloyl-D-alanyl-D-alanine + UDP-N-acetyl-alpha-D-glucosamine = di-trans,octa-cis-undecaprenyl diphospho-[N-acetyl-alpha-D-glucosaminyl-(1-&gt;4)]-N-acetyl-alpha-D-muramoyl-L-alanyl-D-glutamyl-meso-2,6-diaminopimeloyl-D-alanyl-D-alanine + UDP + H(+). The protein operates within cell wall biogenesis; peptidoglycan biosynthesis. In terms of biological role, cell wall formation. Catalyzes the transfer of a GlcNAc subunit on undecaprenyl-pyrophosphoryl-MurNAc-pentapeptide (lipid intermediate I) to form undecaprenyl-pyrophosphoryl-MurNAc-(pentapeptide)GlcNAc (lipid intermediate II). This is UDP-N-acetylglucosamine--N-acetylmuramyl-(pentapeptide) pyrophosphoryl-undecaprenol N-acetylglucosamine transferase from Xylella fastidiosa (strain Temecula1 / ATCC 700964).